The primary structure comprises 460 residues: Ufm1-specific protease 2 (460 aa).

Residues Cys293, Asp417, and His419 contribute to the active site.

It belongs to the peptidase C78 family.

Its subcellular location is the endoplasmic reticulum. It localises to the cytoplasm. The protein resides in the nucleus. In terms of biological role, thiol-dependent isopeptidase that specifically cleaves UFM1, a ubiquitin-like modifier protein, from conjugated proteins. While it is also able to mediate the processing of UFM1 precursors, a prerequisite for conjugation reactions, UFSP2 mainly acts as a protein deUFMylase that mediates deconjugation of UFM1 from target proteins. This chain is Ufm1-specific protease 2, found in Gallus gallus (Chicken).